The following is a 465-amino-acid chain: Ras-like GTPase YcjX (465 aa).

Residues 26-33 (GLSRSGKT) carry the Walker A motif motif. Positions 28, 31, 32, 33, 34, 95, 99, and 100 each coordinate GTP. 6 residues coordinate GDP: G31, K32, T33, A34, W95, and T99. K249 carries the post-translational modification N6-acetyllysine. GTP-binding residues include K338, D340, H341, and V380. K338, D340, H341, and V380 together coordinate GDP.

It to H.influenzae HI_1637. In terms of assembly, monomer in solution. Mg(2+) is required as a cofactor.

It carries out the reaction GTP + H2O = GDP + phosphate + H(+). Its activity is regulated as follows. Alternates between an inactive form bound to GDP and an active form bound to GTP. Likely activated by a guanine nucleotide-exchange factor (GEF). Its function is as follows. Binds GTP and GDP. Has intrinsic GTPase activity. Does not hydrolyze ATP. May act as a transducer of stress responses. This chain is Ras-like GTPase YcjX (ycjX), found in Escherichia coli (strain K12).